A 443-amino-acid polypeptide reads, in one-letter code: Probable lipase C16A3.12c (443 aa).

Over 1–16 the chain is Cytoplasmic; it reads MSGFNKNQIYWGDYVG. A helical; Signal-anchor for type II membrane protein membrane pass occupies residues 17–37; the sequence is VIAAFVGVYTELVARIFIYMI. The Lumenal portion of the chain corresponds to 38 to 443; sequence PERVREWFRV…KHFVKQNGFH (406 aa). The AB hydrolase-1 domain occupies 116 to 410; that stretch reads VVYCHHGLMT…HYEHLDFLWG (295 aa). Residues asparagine 134 and asparagine 177 are each glycosylated (N-linked (GlcNAc...) asparagine). Serine 210 functions as the Nucleophile in the catalytic mechanism. Residues asparagine 304 and asparagine 335 are each glycosylated (N-linked (GlcNAc...) asparagine). Catalysis depends on charge relay system residues aspartate 378 and histidine 404.

This sequence belongs to the AB hydrolase superfamily. Lipase family.

It is found in the cytoplasm. The protein localises to the vacuole. Its subcellular location is the membrane. Its function is as follows. Probable lipase. The chain is Probable lipase C16A3.12c from Schizosaccharomyces pombe (strain 972 / ATCC 24843) (Fission yeast).